A 142-amino-acid polypeptide reads, in one-letter code: Mediator of RNA polymerase II transcription subunit 9 (142 aa).

Residues 1–58 are disordered; the sequence is MASSGVAGGRQAEDTLQPPPELLPESKPPPPPQPLPVAALPPPAAPRPQSPAGAKEEN. Residue A2 is modified to N-acetylalanine. Pro residues predominate over residues 17–49; the sequence is QPPPELLPESKPPPPPQPLPVAALPPPAAPRPQ. Residues 78-134 are a coiled coil; sequence DLHQDLNALKTKFQELRKLIGTMPGIHVSPEQQQQQLHSLREQVRTKNELLQKYKSL. S106 bears the Phosphoserine mark.

Belongs to the Mediator complex subunit 9 family. As to quaternary structure, component of the Mediator complex, which is composed of MED1, MED4, MED6, MED7, MED8, MED9, MED10, MED11, MED12, MED13, MED13L, MED14, MED15, MED16, MED17, MED18, MED19, MED20, MED21, MED22, MED23, MED24, MED25, MED26, MED27, MED29, MED30, MED31, CCNC, CDK8 and CDC2L6/CDK11. The MED12, MED13, CCNC and CDK8 subunits form a distinct module termed the CDK8 module. Mediator containing the CDK8 module is less active than Mediator lacking this module in supporting transcriptional activation. Individual preparations of the Mediator complex lacking one or more distinct subunits have been variously termed ARC, CRSP, DRIP, PC2, SMCC and TRAP.

The protein localises to the nucleus. Component of the Mediator complex, a coactivator involved in the regulated transcription of nearly all RNA polymerase II-dependent genes. Mediator functions as a bridge to convey information from gene-specific regulatory proteins to the basal RNA polymerase II transcription machinery. Mediator is recruited to promoters by direct interactions with regulatory proteins and serves as a scaffold for the assembly of a functional preinitiation complex with RNA polymerase II and the general transcription factors. The chain is Mediator of RNA polymerase II transcription subunit 9 (Med9) from Mus musculus (Mouse).